The chain runs to 76 residues: Monocarboxylate transporter 1 (76 aa).

3 helical membrane passes run 1-18, 28-48, and 53-73; these read LSILAFVDMVARPSMGLA, IQYFFAASVVANGVCHLLAPL, and IGFCVYAGVFGFAFGWLSSVL. Asp-8 serves as a coordination point for H(+). Position 12 (Arg-12) interacts with (S)-lactate.

Belongs to the major facilitator superfamily. Monocarboxylate porter (TC 2.A.1.13) family. As to quaternary structure, interacts with BSG; interaction mediates SLC16A1 targeting to the plasma membrane. Interacts with EMB; interaction mediates SLC16A1 targeting to the plasma membrane.

The protein localises to the cell membrane. It is found in the basolateral cell membrane. The protein resides in the apical cell membrane. The catalysed reaction is (S)-lactate(in) + H(+)(in) = (S)-lactate(out) + H(+)(out). It carries out the reaction acetate(out) + H(+)(out) = acetate(in) + H(+)(in). The enzyme catalyses acetoacetate(out) + H(+)(out) = acetoacetate(in) + H(+)(in). It catalyses the reaction pyruvate(out) + H(+)(out) = pyruvate(in) + H(+)(in). The catalysed reaction is (R)-3-hydroxybutanoate(out) + H(+)(out) = (R)-3-hydroxybutanoate(in) + H(+)(in). It carries out the reaction 3-methyl-2-oxobutanoate(out) + H(+)(out) = 3-methyl-2-oxobutanoate(in) + H(+)(in). The enzyme catalyses 4-methyl-2-oxopentanoate(out) + H(+)(out) = 4-methyl-2-oxopentanoate(in) + H(+)(in). It catalyses the reaction succinate(in) + 2 H(+)(in) = succinate(out) + 2 H(+)(out). Its function is as follows. Bidirectional proton-coupled monocarboxylate transporter. Catalyzes the rapid transport across the plasma membrane of many monocarboxylates such as lactate, pyruvate, acetate and the ketone bodies acetoacetate and beta-hydroxybutyrate, and thus contributes to the maintenance of intracellular pH. The transport direction is determined by the proton motive force and the concentration gradient of the substrate monocarboxylate. MCT1 is a major lactate exporter. Plays a role in cellular responses to a high-fat diet by modulating the cellular levels of lactate and pyruvate that contribute to the regulation of central metabolic pathways and insulin secretion, with concomitant effects on plasma insulin levels and blood glucose homeostasis. Facilitates the protonated monocarboxylate form of succinate export, that its transient protonation upon muscle cell acidification in exercising muscle and ischemic heart. Functions via alternate outward- and inward-open conformation states. Protonation and deprotonation is essential for the conformational transition. In Meriones unguiculatus (Mongolian jird), this protein is Monocarboxylate transporter 1 (SLC16A1).